The sequence spans 64 residues: Large ribosomal subunit protein bL32 (64 aa).

Positions 1–35 (MAVQKSRVTPSRRGQRRSHDALTAKQLSTDPTSGE) are disordered.

It belongs to the bacterial ribosomal protein bL32 family.

This chain is Large ribosomal subunit protein bL32, found in Xanthomonas campestris pv. campestris (strain 8004).